The primary structure comprises 362 residues: Putative G-protein coupled receptor B0244.5 (362 aa).

Residues 1–47 (MQNIFENCSYHSKYEPYFLNCTNTTNQCVLIQDVGIIQAIDFWANLC) are Extracellular-facing. Residues Asn7, Asn20, and Asn23 are each glycosylated (N-linked (GlcNAc...) asparagine). A helical membrane pass occupies residues 48 to 68 (IPFTLFVIAFILNGYYLSILI). The Cytoplasmic portion of the chain corresponds to 69 to 81 (PEFRKMNDTTKKQ). The helical transmembrane segment at 82-102 (YIFVVSRGISSLSASSIMMVL) threads the bilayer. Residues 103–125 (RLLKMLSTSFTVYFLFFLIDDLS) are Extracellular-facing. The chain crosses the membrane as a helical span at residues 126-145 (FYSLLGSYVGSTLLLYLATV). Topologically, residues 146–161 (RPIFYSIQISVRIVYK) are cytoplasmic. Residues 162–182 (FALVNVLLAVVLAVTTAIFQA) traverse the membrane as a helical segment. At 183 to 204 (AEVSDGFFHCDVQHCQPIINIA) the chain is on the extracellular side. A helical membrane pass occupies residues 205–225 (MFVIIATSFLIPIITLTFVLV). At 226-255 (TLCFQKSRTQSIGNFTVDNSVYKSARTRLA) the chain is on the cytoplasmic side. The chain crosses the membrane as a helical span at residues 256–276 (WTLFTFTLISLTEMIPSSFLV). The Extracellular segment spans residues 277 to 295 (NLRVEDTITICVNFYQADH). A helical membrane pass occupies residues 296-316 (LFIPAIMNSFQTLAWGIALIV). At 317–362 (DPLCALLFDPRIRKVWVEHVSRLSIIIGRSFEACCHSNLNKEIQDK) the chain is on the cytoplasmic side.

It belongs to the G-protein coupled receptor 1 family. B0244 subfamily.

It is found in the cell membrane. This Caenorhabditis elegans protein is Putative G-protein coupled receptor B0244.5.